Here is a 348-residue protein sequence, read N- to C-terminus: Autophagy-related protein 27 (348 aa).

Residues 1–20 (MYRPDLLAFLLPLLAAPVFS) form the signal peptide. The Lumenal segment spans residues 21–274 (AETLDCGKIR…DDGGDNSSSH (254 aa)). An MRH domain is found at 24–255 (LDCGKIRADG…TWHTKYACEK (232 aa)). Cystine bridges form between Cys26–Cys69, Cys82–Cys89, and Cys175–Cys253. 2 N-linked (GlcNAc...) asparagine glycosylation sites follow: Asn61 and Asn84. Over residues 180 to 208 (EGTEGEWVSEEKYEKRADEKKDDDKKEDG) the composition is skewed to basic and acidic residues. Residues 180–219 (EGTEGEWVSEEKYEKRADEKKDDDKKEDGGDKDEGESTLE) are disordered. 2 N-linked (GlcNAc...) asparagine glycosylation sites follow: Asn226 and Asn270. The helical transmembrane segment at 275–295 (WGFFTWFVLIAFLLIAGYLIF) threads the bilayer. Residues 296–348 (SSWINFTRYGARGWDLLPHSDTIRDIPYLLKDFIRRILNTVQGTGSRGGYSAV) are Cytoplasmic-facing.

It belongs to the ATG27 family. Forms a complex with ATG9 and ATG23.

Its subcellular location is the cytoplasmic vesicle membrane. It localises to the golgi apparatus membrane. The protein localises to the mitochondrion membrane. The protein resides in the preautophagosomal structure membrane. Functionally, effector of VPS34 phosphatidylinositol 3-phosphate kinase signaling. Regulates the cytoplasm to vacuole transport (Cvt) vesicle formation. Plays a role in ATG protein retrieval from the pre-autophagosomal structure (PAS) and is especially required for autophagy-dependent cycling of ATG9. Autophagy is required for proper vegetative growth, asexual/sexual reproduction, and full virulence. Autophagy is particularly involved in the biosynthesis of deoxynivalenol (DON), an important virulence determinant. The polypeptide is Autophagy-related protein 27 (Gibberella zeae (strain ATCC MYA-4620 / CBS 123657 / FGSC 9075 / NRRL 31084 / PH-1) (Wheat head blight fungus)).